The following is a 175-amino-acid chain: ATP-dependent protease subunit HslV (175 aa).

The active site involves Thr5. Gly160, Asp163, and Thr166 together coordinate Na(+).

This sequence belongs to the peptidase T1B family. HslV subfamily. As to quaternary structure, a double ring-shaped homohexamer of HslV is capped on each side by a ring-shaped HslU homohexamer. The assembly of the HslU/HslV complex is dependent on binding of ATP.

The protein localises to the cytoplasm. The catalysed reaction is ATP-dependent cleavage of peptide bonds with broad specificity.. Allosterically activated by HslU binding. In terms of biological role, protease subunit of a proteasome-like degradation complex believed to be a general protein degrading machinery. This is ATP-dependent protease subunit HslV from Myxococcus xanthus.